Here is a 331-residue protein sequence, read N- to C-terminus: Probable transaldolase (331 aa).

The active-site Schiff-base intermediate with substrate is the K142.

Belongs to the transaldolase family. Type 1 subfamily. As to quaternary structure, homodimer.

It localises to the cytoplasm. It catalyses the reaction D-sedoheptulose 7-phosphate + D-glyceraldehyde 3-phosphate = D-erythrose 4-phosphate + beta-D-fructose 6-phosphate. Its pathway is carbohydrate degradation; pentose phosphate pathway; D-glyceraldehyde 3-phosphate and beta-D-fructose 6-phosphate from D-ribose 5-phosphate and D-xylulose 5-phosphate (non-oxidative stage): step 2/3. Its function is as follows. Transaldolase is important for the balance of metabolites in the pentose-phosphate pathway. The protein is Probable transaldolase of Drosophila melanogaster (Fruit fly).